Consider the following 1607-residue polypeptide: Phosphatidylinositol 3-kinase piki-1 (1607 aa).

Residues 2 to 21 (SDDEELQLAIEISKKTFKDE) form the UIM domain. Disordered stretches follow at residues 54 to 91 (EANS…HSQS), 105 to 128 (STSQ…KFPP), and 142 to 182 (PPPP…SFAS). Residues 58–69 (PGPSSYSGSLAT) show a composition bias toward polar residues. Pro residues predominate over residues 158-169 (PPVPIHPTPPVS). Residues 362–453 (ASTVKVVVYK…GDDVKLDLGV (92 aa)) form the PI3K-RBD domain. The C2 PI3K-type domain occupies 598–766 (KMDFLQIMLN…KIWDTEIYFP (169 aa)). Positions 776-953 (PQDFATLDIE…AIRCQNLQQK (178 aa)) constitute a PIK helical domain. Residues 1029 to 1303 (RIEECSVFNS…MIQNSLGSAF (275 aa)) enclose the PI3K/PI4K catalytic domain. The segment at 1035 to 1041 (VFNSNAK) is G-loop. Positions 1168–1176 (GIGDRHNDN) are catalytic loop. The segment at 1187 to 1213 (HIDFGKYMGDWQMAAGFRRDRVPFVFT) is activation loop. Residues 1344 to 1458 (GRISRVTVLK…TFFHSILRDN (115 aa)) form the PX domain. Positions 1472 to 1601 (SQCQIYLKIE…KNCRTLEGWF (130 aa)) constitute a C2 domain.

It belongs to the PI3/PI4-kinase family.

The protein resides in the cell projection. It is found in the phagocytic cup. Its subcellular location is the cytoplasmic vesicle. The protein localises to the phagosome membrane. It localises to the cytoplasm. The enzyme catalyses a 1,2-diacyl-sn-glycero-3-phospho-(1D-myo-inositol) + ATP = a 1,2-diacyl-sn-glycero-3-phospho-(1D-myo-inositol-3-phosphate) + ADP + H(+). Phosphatidylinositol 3-kinase involved in clearance of apoptotic cell corpses by phagosomes. Phagosome maturation requires two sequential and non-overlapping pulses of phosphatidylinositol-3-phosphate (PI3P) on the vesicle surface which mediates recruitment of sortins snx-1 and lst-4 and small GTPases rab-5, rab-2 and rab-7. The first pulse is initiated by piki-1, then maintained by vps-34 which also produces the second pulse. Unlike vps-34, not involved in the formation of PI3P in early endosomes. The sequence is that of Phosphatidylinositol 3-kinase piki-1 from Caenorhabditis elegans.